Here is a 534-residue protein sequence, read N- to C-terminus: 26S proteasome non-ATPase regulatory subunit 3 (534 aa).

The span at 1–16 (MKQEGSARRRGADKAK) shows a compositional bias: basic and acidic residues. Positions 1–68 (MKQEGSARRR…AAEHSQRELD (68 aa)) are disordered. Residues 17–32 (PPPGGGEQEPPPPPAP) show a composition bias toward pro residues. K38 participates in a covalent cross-link: Glycyl lysine isopeptide (Lys-Gly) (interchain with G-Cter in SUMO1); alternate. K38 is covalently cross-linked (Glycyl lysine isopeptide (Lys-Gly) (interchain with G-Cter in SUMO2); alternate). Low complexity predominate over residues 49–61 (GETAGKTAAAAAE). Positions 286-465 (ARYLYYTGRI…GYVQSKEMID (180 aa)) constitute a PCI domain. Phosphoserine is present on residues S418 and S430. The disordered stretch occupies residues 500-534 (SYNKDLESAEERREREQQDLEFAKEMAEDDDDSFP). The segment covering 501–525 (YNKDLESAEERREREQQDLEFAKEM) has biased composition (basic and acidic residues).

It belongs to the proteasome subunit S3 family. As to quaternary structure, component of the 19S proteasome regulatory particle complex. The 26S proteasome consists of a 20S core particle (CP) and two 19S regulatory subunits (RP). The regulatory particle is made of a lid composed of 9 subunits including PSMD3, a base containing 6 ATPases and few additional components. Interacts with UBQLN1 (via ubiquitin-like domain). Interacts with ERCC6.

Its function is as follows. Component of the 26S proteasome, a multiprotein complex involved in the ATP-dependent degradation of ubiquitinated proteins. This complex plays a key role in the maintenance of protein homeostasis by removing misfolded or damaged proteins, which could impair cellular functions, and by removing proteins whose functions are no longer required. Therefore, the proteasome participates in numerous cellular processes, including cell cycle progression, apoptosis, or DNA damage repair. The sequence is that of 26S proteasome non-ATPase regulatory subunit 3 (PSMD3) from Bos taurus (Bovine).